The chain runs to 186 residues: Homeobox expressed in ES cells 1 (186 aa).

Positions 109–168 form a DNA-binding region, homeobox; sequence GRRPRTAFTRSQIEILENVFRVNSYPGIDIREELAGKLALDEDRIQIWFQNRRAKLKRSH.

The protein belongs to the ANF homeobox family. In terms of assembly, interacts (via N-terminus) with zyx.

The protein localises to the nucleus. Functionally, regulates the earliest stages of development of the anterior neural plate. Plays a role in forebrain development by inhibiting the expression of otx2 and pax6 in the rostral region of the anterior neural plate. Necessary for both neural differentiation and neural patterning. Controls Spemann organizer development. May act as a transcriptional repressor. The polypeptide is Homeobox expressed in ES cells 1 (Xenopus tropicalis (Western clawed frog)).